Here is a 144-residue protein sequence, read N- to C-terminus: Large ribosomal subunit protein uL11 (144 aa).

It belongs to the universal ribosomal protein uL11 family. Part of the ribosomal stalk of the 50S ribosomal subunit. Interacts with L10 and the large rRNA to form the base of the stalk. L10 forms an elongated spine to which L12 dimers bind in a sequential fashion forming a multimeric L10(L12)X complex. Post-translationally, one or more lysine residues are methylated.

Its function is as follows. Forms part of the ribosomal stalk which helps the ribosome interact with GTP-bound translation factors. In Rhodococcus erythropolis (strain PR4 / NBRC 100887), this protein is Large ribosomal subunit protein uL11.